The following is a 320-amino-acid chain: Biotin synthase (320 aa).

The 228-residue stretch at 43–270 folds into the Radical SAM core domain; that stretch reads GAVQKSQLLS…KSWVRLSAGR (228 aa). 3 residues coordinate [4Fe-4S] cluster: cysteine 58, cysteine 62, and cysteine 65. Residues cysteine 102, cysteine 133, cysteine 193, and arginine 265 each contribute to the [2Fe-2S] cluster site.

The protein belongs to the radical SAM superfamily. Biotin synthase family. As to quaternary structure, homodimer. The cofactor is [4Fe-4S] cluster. Requires [2Fe-2S] cluster as cofactor.

The catalysed reaction is (4R,5S)-dethiobiotin + (sulfur carrier)-SH + 2 reduced [2Fe-2S]-[ferredoxin] + 2 S-adenosyl-L-methionine = (sulfur carrier)-H + biotin + 2 5'-deoxyadenosine + 2 L-methionine + 2 oxidized [2Fe-2S]-[ferredoxin]. It participates in cofactor biosynthesis; biotin biosynthesis; biotin from 7,8-diaminononanoate: step 2/2. In terms of biological role, catalyzes the conversion of dethiobiotin (DTB) to biotin by the insertion of a sulfur atom into dethiobiotin via a radical-based mechanism. In Hyphomonas neptunium (strain ATCC 15444), this protein is Biotin synthase.